The sequence spans 452 residues: Bifunctional protein GlmU (452 aa).

The tract at residues 1–226 is pyrophosphorylase; it reads MSLSVVILAA…ATEVEGVNTR (226 aa). Residues 8-11, Lys22, Gln73, 78-79, 100-102, Gly137, Glu151, Asn166, and Asn224 each bind UDP-N-acetyl-alpha-D-glucosamine; these read LAAG, GT, and YGD. Position 102 (Asp102) interacts with Mg(2+). Asn224 contributes to the Mg(2+) binding site. The linker stretch occupies residues 227–247; that stretch reads LQLANLERAYQLKKATELLLS. An N-acetyltransferase region spans residues 248-452; sequence GVMLRDPNRF…INNWKRPTKK (205 aa). Positions 330 and 348 each coordinate UDP-N-acetyl-alpha-D-glucosamine. Catalysis depends on His360, which acts as the Proton acceptor. UDP-N-acetyl-alpha-D-glucosamine is bound by residues Tyr363 and Asn374. Residues Ala377, 383-384, Ser402, Ala420, and Arg437 each bind acetyl-CoA; that span reads NY.

It in the N-terminal section; belongs to the N-acetylglucosamine-1-phosphate uridyltransferase family. This sequence in the C-terminal section; belongs to the transferase hexapeptide repeat family. As to quaternary structure, homotrimer. It depends on Mg(2+) as a cofactor.

It is found in the cytoplasm. It catalyses the reaction alpha-D-glucosamine 1-phosphate + acetyl-CoA = N-acetyl-alpha-D-glucosamine 1-phosphate + CoA + H(+). The catalysed reaction is N-acetyl-alpha-D-glucosamine 1-phosphate + UTP + H(+) = UDP-N-acetyl-alpha-D-glucosamine + diphosphate. It functions in the pathway nucleotide-sugar biosynthesis; UDP-N-acetyl-alpha-D-glucosamine biosynthesis; N-acetyl-alpha-D-glucosamine 1-phosphate from alpha-D-glucosamine 6-phosphate (route II): step 2/2. It participates in nucleotide-sugar biosynthesis; UDP-N-acetyl-alpha-D-glucosamine biosynthesis; UDP-N-acetyl-alpha-D-glucosamine from N-acetyl-alpha-D-glucosamine 1-phosphate: step 1/1. Its pathway is bacterial outer membrane biogenesis; LPS lipid A biosynthesis. Catalyzes the last two sequential reactions in the de novo biosynthetic pathway for UDP-N-acetylglucosamine (UDP-GlcNAc). The C-terminal domain catalyzes the transfer of acetyl group from acetyl coenzyme A to glucosamine-1-phosphate (GlcN-1-P) to produce N-acetylglucosamine-1-phosphate (GlcNAc-1-P), which is converted into UDP-GlcNAc by the transfer of uridine 5-monophosphate (from uridine 5-triphosphate), a reaction catalyzed by the N-terminal domain. In Psychromonas ingrahamii (strain DSM 17664 / CCUG 51855 / 37), this protein is Bifunctional protein GlmU.